Here is a 344-residue protein sequence, read N- to C-terminus: Tetraacyldisaccharide 4'-kinase (344 aa).

ATP is bound at residue 65 to 72; it reads HAGGTGKT.

This sequence belongs to the LpxK family.

The catalysed reaction is a lipid A disaccharide + ATP = a lipid IVA + ADP + H(+). Its pathway is glycolipid biosynthesis; lipid IV(A) biosynthesis; lipid IV(A) from (3R)-3-hydroxytetradecanoyl-[acyl-carrier-protein] and UDP-N-acetyl-alpha-D-glucosamine: step 6/6. Functionally, transfers the gamma-phosphate of ATP to the 4'-position of a tetraacyldisaccharide 1-phosphate intermediate (termed DS-1-P) to form tetraacyldisaccharide 1,4'-bis-phosphate (lipid IVA). This chain is Tetraacyldisaccharide 4'-kinase, found in Neisseria meningitidis serogroup C / serotype 2a (strain ATCC 700532 / DSM 15464 / FAM18).